The primary structure comprises 225 residues: Dimerizing cyclase tstC (225 aa).

Positions 1-19 (MRLSTLSSLLLGSSSIVFA) are cleaved as a signal peptide. 3 N-linked (GlcNAc...) asparagine glycosylation sites follow: Asn-146, Asn-195, and Asn-217.

Belongs to the dimerizing cyclase tstC family.

The catalysed reaction is 2 [4-(deca-1,8-diyl)-2,5-dioxo-2,5-dihydro-3-furanyl]acetate + H(+) = 2-[(1R,8S,14R,15R)-11-hydroxy-14,15-bis[(6E)-oct-6-en-1-yl]-3,5,9-trioxo-4,10-dioxatetracyclo[9.4.0.0(2,6).0(8,12)]pentadeca-2(6),12-dien-8-yl]acetate + CO2. Its pathway is secondary metabolite biosynthesis. Its function is as follows. Dimerizing cyclase; part of the gene cluster that mediates the biosynthesis of the antihypercholesterolemic agents phomoidrides which are dimeric anhydrides. Within the pathway, tstC produces the bicyclo[4.3.1]deca-1,6-diene core of phomoidrides via the dimerization of the monomeric anhydrides leading to prephomoidride. The pathway begins with the highly reducing polyketide synthase tstA that catalyzes the formation of a C12-fatty acyl-ACP, starting from one acetate and 5 malonate units. The hydrolase tstM is involved in the release of the C12-fatty acyl chain from phiA. The alkylcitrate synthase (ACS) tstJ and the alkylcitrate dehydratase (ACDH) tstI then give rise to decarboxylated monomeric anhydrides by coupling the C12-fatty acyl chain with oxalacetic acid. The cyclase tstC is responsible for the dimerization of the monomeric anhydrides which leads to the production of prephomoidride that contains the characteristic bicyclo[4.3.1]deca-1,6-diene system of phomoidrides. Iterative oxidation catalyzed by the alpha-ketoglutarate-dependent dioxygenase tstK produced then phomoidride A. Finally, the methyltransferase tstE converts phomoidride A to phomoidride B via an acetalization reaction. The phosphatidylethanolamine-binding protein tstB and tstN are not essential for dimerization and their functions have still to be determined. This chain is Dimerizing cyclase tstC, found in Talaromyces stipitatus (strain ATCC 10500 / CBS 375.48 / QM 6759 / NRRL 1006) (Penicillium stipitatum).